The chain runs to 231 residues: Endonuclease NucS (231 aa).

It belongs to the NucS endonuclease family.

It localises to the cytoplasm. Its function is as follows. Cleaves both 3' and 5' ssDNA extremities of branched DNA structures. This chain is Endonuclease NucS, found in Beutenbergia cavernae (strain ATCC BAA-8 / DSM 12333 / CCUG 43141 / JCM 11478 / NBRC 16432 / NCIMB 13614 / HKI 0122).